We begin with the raw amino-acid sequence, 117 residues long: Circadian clock oscillator protein KaiB (117 aa).

The protein belongs to the KaiB family. In terms of assembly, may undergo a major conformational rearrangment; in the free state forms homooligomers. When bound to KaiC switches to a monomeric thioredoxin-fold (KaiB(fs)). The active oscillator complex is probably KaiC(6):KaiB(6).

Its function is as follows. Component of the KaiBC clock protein complex, which constitutes the main circadian regulator in cyanobacteria; it may modify the ATPase activity of KaiC. Functionally, may be a metamorphic protein which reversibly switches between an inactive tetrameric fold and a rare, thioredoxin-like monomeric fold (KaiB(fs)). KaiB(fs) binds phospho-KaiC, and perhaps clock output effectors. This chain is Circadian clock oscillator protein KaiB, found in Prochlorococcus marinus (strain SARG / CCMP1375 / SS120).